Consider the following 447-residue polypeptide: Neuronal acetylcholine receptor subunit alpha-10 (447 aa).

The first 24 residues, 1-24 (MGTRSHYLDLGFLLLLFLPAECLG), serve as a signal peptide directing secretion. Topologically, residues 25–237 (AEGRLAHKLF…FTLLLRRRAA (213 aa)) are extracellular. N40 and N56 each carry an N-linked (GlcNAc...) asparagine glycan. Cystine bridges form between C154–C168 and C218–C219. The next 3 membrane-spanning stretches (helical) occupy residues 238–258 (AYVC…PLAF), 268–288 (VSLG…LAES), and 302–322 (YMAT…IMNL). Over 323–425 (HYCGPNAHPV…WKRLARVMDR (103 aa)) the chain is Cytoplasmic. Residues 426–446 (FFLGIFFCMALVMSLIVLVQA) form a helical membrane-spanning segment.

It belongs to the ligand-gated ion channel (TC 1.A.9) family. Acetylcholine receptor (TC 1.A.9.1) subfamily. Alpha-10/CHRNA10 sub-subfamily. Forms homo- or heterooligomeric channels in conjunction with CHRNA10. The native outer hair cell receptor may be composed of CHRNA9:CHRNA10 heterooligomers. Found in the stoichiometric form (CHRNA9)2:(CHRNA10)3. Expressed in the outer hair cells of the cochlea and the neurons of dorsal root ganglia.

Its subcellular location is the synaptic cell membrane. The protein localises to the cell membrane. It carries out the reaction Ca(2+)(in) = Ca(2+)(out). The enzyme catalyses Mg(2+)(in) = Mg(2+)(out). It catalyses the reaction K(+)(in) = K(+)(out). The catalysed reaction is Na(+)(in) = Na(+)(out). Activated by a myriad of ligands such as acetylcholine. AChR activity is inhibited by the antagonist alpha-conotoxins RgIA and GeXXA, small disulfide-constrained peptides from cone snails. Functionally, component of neuronal acetylcholine receptors (nAChRs) that function as pentameric, ligand-gated cation channels with high calcium permeability among other activities. nAChRs are excitatory neurotrasnmitter receptors formed by a collection of nAChR subunits known to mediate synaptic transmission in the nervous system and the neuromuscular junction. Each nAchR subunit confers differential attributes to channel properties, including activation, deactivation and desensitization kinetics, pH sensitivity, cation permeability, and binding to allosteric modulators. Forms heteropentamers with CHRNA9. Expressed in the inner ear, in sympathetic neurons and in other non-neuronal cells, such as skin keratinocytes and lymphocytes. nAChR formed by CHRNA9:CHRNA10 mediate central nervous system control of auditory and vestibular sensory processing. The channel is permeable to a range of divalent cations including calcium, the influx of which may activate a potassium current which hyperpolarizes the cell membrane. In the ear, mediates synaptic transmission between efferent olivocochlear fibers and hair cells of the cochlea, this may lead to a reduction in basilar membrane motion, altering the activity of auditory nerve fibers and reducing the range of dynamic hearing. This may protect against acoustic trauma. May also regulate keratinocyte adhesion. This chain is Neuronal acetylcholine receptor subunit alpha-10 (Chrna10), found in Rattus norvegicus (Rat).